We begin with the raw amino-acid sequence, 398 residues long: G2/mitotic-specific cyclin-B2 (398 aa).

Phosphothreonine is present on T8. Phosphoserine is present on residues S11, S77, and S92. T94 bears the Phosphothreonine mark. Phosphoserine is present on residues S99, S392, and S398.

Belongs to the cyclin family. Cyclin AB subfamily. In terms of assembly, interacts with the CDK1 protein kinase to form a serine/threonine kinase holoenzyme complex also known as maturation promoting factor (MPF). The cyclin subunit imparts substrate specificity to the complex.

Functionally, essential for the control of the cell cycle at the G2/M (mitosis) transition. The protein is G2/mitotic-specific cyclin-B2 (CCNB2) of Homo sapiens (Human).